The following is a 795-amino-acid chain: Protocadherin beta-5 (795 aa).

The N-terminal stretch at 1 to 30 (METALAKTPQKRQVMFLAILLLLWEAGSEA) is a signal peptide. Topologically, residues 31–689 (VRYSIPEETE…AQADSLTVYL (659 aa)) are extracellular. Cadherin domains follow at residues 35–133 (IPEE…APEF), 138–242 (MLLK…APEF), 247–346 (YEVQ…APEL), 351–450 (LSSP…APAF), and 455–560 (YTLF…SPFV). Residue Asn-169 is glycosylated (N-linked (GlcNAc...) asparagine). Lys-296 bears the N6-acetyllysine mark. N-linked (GlcNAc...) asparagine glycans are attached at residues Asn-417 and Asn-435. N-linked (GlcNAc...) asparagine glycosylation is present at Asn-566. The Cadherin 6 domain occupies 567–670 (GSAPCTELVP…LVDGFSQPYL (104 aa)). Residues 690 to 710 (VVALASVSSLFLFSVLLFVAV) traverse the membrane as a helical segment. The Cytoplasmic segment spans residues 711 to 795 (RLCRRSRAAP…AAFRNSFGLN (85 aa)).

The protein localises to the cell membrane. In terms of biological role, potential calcium-dependent cell-adhesion protein. May be involved in the establishment and maintenance of specific neuronal connections in the brain. In Homo sapiens (Human), this protein is Protocadherin beta-5 (PCDHB5).